We begin with the raw amino-acid sequence, 285 residues long: Alginate lyase (285 aa).

An N-terminal signal peptide occupies residues 1 to 20 (MIKSNLVISSLAIVSSMSYA).

Belongs to the polysaccharide lyase 6 family.

The catalysed reaction is Eliminative cleavage of alginate to give oligosaccharides with 4-deoxy-alpha-L-erythro-hex-4-enuronosyl groups at their non-reducing ends and beta-D-mannuronate at their reducing end.. The polypeptide is Alginate lyase (alxM) (Photobacterium sp. (strain ATCC 43367)).